Consider the following 722-residue polypeptide: 1,4-alpha-glucan branching enzyme GlgB (722 aa).

The Nucleophile role is filled by Asp-401. Catalysis depends on Glu-454, which acts as the Proton donor.

This sequence belongs to the glycosyl hydrolase 13 family. GlgB subfamily. As to quaternary structure, monomer.

The enzyme catalyses Transfers a segment of a (1-&gt;4)-alpha-D-glucan chain to a primary hydroxy group in a similar glucan chain.. It participates in glycan biosynthesis; glycogen biosynthesis. Catalyzes the formation of the alpha-1,6-glucosidic linkages in glycogen by scission of a 1,4-alpha-linked oligosaccharide from growing alpha-1,4-glucan chains and the subsequent attachment of the oligosaccharide to the alpha-1,6 position. The sequence is that of 1,4-alpha-glucan branching enzyme GlgB from Rubrobacter xylanophilus (strain DSM 9941 / JCM 11954 / NBRC 16129 / PRD-1).